The following is a 549-amino-acid chain: Serine/threonine-protein phosphatase PPQ (549 aa).

Residues 1–13 (MRRSPSRSNNNFA) are compositionally biased toward polar residues. 4 disordered regions span residues 1 to 50 (MRRS…RSLP), 64 to 85 (YNTL…DNLL), 133 to 158 (TSST…NYSS), and 189 to 219 (SRVK…PKSS). Composition is skewed to low complexity over residues 16-32 (NCST…TTPS) and 68-83 (ASAG…SNDN). Residues 205–217 (APSSPTSGIPNPK) are compositionally biased toward polar residues. Mn(2+) is bound by residues aspartate 301, histidine 303, aspartate 329, and asparagine 361. Histidine 362 (proton donor) is an active-site residue. Positions 410 and 485 each coordinate Mn(2+).

The protein belongs to the PPP phosphatase family. PP-Z subfamily. It depends on Mn(2+) as a cofactor.

The enzyme catalyses O-phospho-L-seryl-[protein] + H2O = L-seryl-[protein] + phosphate. It carries out the reaction O-phospho-L-threonyl-[protein] + H2O = L-threonyl-[protein] + phosphate. Phosphatase involved in the regulation of protein synthesis. Affects translational accuracy. The sequence is that of Serine/threonine-protein phosphatase PPQ (PPQ1) from Saccharomyces cerevisiae (strain ATCC 204508 / S288c) (Baker's yeast).